A 253-amino-acid polypeptide reads, in one-letter code: Tryptophan synthase alpha chain (253 aa).

Residues Glu-47 and Asp-58 each act as proton acceptor in the active site.

Belongs to the TrpA family. Tetramer of two alpha and two beta chains.

It catalyses the reaction (1S,2R)-1-C-(indol-3-yl)glycerol 3-phosphate + L-serine = D-glyceraldehyde 3-phosphate + L-tryptophan + H2O. The protein operates within amino-acid biosynthesis; L-tryptophan biosynthesis; L-tryptophan from chorismate: step 5/5. Its function is as follows. The alpha subunit is responsible for the aldol cleavage of indoleglycerol phosphate to indole and glyceraldehyde 3-phosphate. This Lactococcus lactis subsp. cremoris (strain SK11) protein is Tryptophan synthase alpha chain.